A 124-amino-acid polypeptide reads, in one-letter code: Small ribosomal subunit protein uS13 (124 aa).

The segment at R94 to R124 is disordered.

It belongs to the universal ribosomal protein uS13 family. Part of the 30S ribosomal subunit. Forms a loose heterodimer with protein S19. Forms two bridges to the 50S subunit in the 70S ribosome.

Its function is as follows. Located at the top of the head of the 30S subunit, it contacts several helices of the 16S rRNA. In the 70S ribosome it contacts the 23S rRNA (bridge B1a) and protein L5 of the 50S subunit (bridge B1b), connecting the 2 subunits; these bridges are implicated in subunit movement. Contacts the tRNAs in the A and P-sites. The protein is Small ribosomal subunit protein uS13 of Mycobacterium tuberculosis (strain ATCC 25177 / H37Ra).